Reading from the N-terminus, the 226-residue chain is MADVALKRGPGRGRFVTFEGGEGAGKSTQIKMLAARLESEGMRVVLTREPGGSPGAEIMRHLVLSGMGKLLGAEAETLLFAAARDDHVRNVILPALSQGSWVLCDRFFDSTRAYQGSLGKVAPDVLNAMQRVTIGDLKPDLTLILDVPVEVGLKRAAARRGAGAPDRFEAEDIKFHKGLRDAFHKIADDDPKRCVLIDATAGPDPVSLLVWDAVRERLFTAVAAAS.

20–27 lines the ATP pocket; the sequence is GGEGAGKS.

Belongs to the thymidylate kinase family.

The catalysed reaction is dTMP + ATP = dTDP + ADP. Phosphorylation of dTMP to form dTDP in both de novo and salvage pathways of dTTP synthesis. The sequence is that of Thymidylate kinase from Bradyrhizobium sp. (strain BTAi1 / ATCC BAA-1182).